We begin with the raw amino-acid sequence, 298 residues long: 4-hydroxy-tetrahydrodipicolinate synthase (298 aa).

T51 contributes to the pyruvate binding site. Y139 functions as the Proton donor/acceptor in the catalytic mechanism. The active-site Schiff-base intermediate with substrate is K167. I209 contributes to the pyruvate binding site.

This sequence belongs to the DapA family. As to quaternary structure, homotetramer; dimer of dimers.

The protein localises to the cytoplasm. The enzyme catalyses L-aspartate 4-semialdehyde + pyruvate = (2S,4S)-4-hydroxy-2,3,4,5-tetrahydrodipicolinate + H2O + H(+). It functions in the pathway amino-acid biosynthesis; L-lysine biosynthesis via DAP pathway; (S)-tetrahydrodipicolinate from L-aspartate: step 3/4. Catalyzes the condensation of (S)-aspartate-beta-semialdehyde [(S)-ASA] and pyruvate to 4-hydroxy-tetrahydrodipicolinate (HTPA). In Histophilus somni (strain 2336) (Haemophilus somnus), this protein is 4-hydroxy-tetrahydrodipicolinate synthase.